The following is a 161-amino-acid chain: 2-C-methyl-D-erythritol 2,4-cyclodiphosphate synthase (161 aa).

2 residues coordinate a divalent metal cation: aspartate 10 and histidine 12. Residues 10–12 (DVH) and 36–37 (HS) each bind 4-CDP-2-C-methyl-D-erythritol 2-phosphate. Histidine 44 provides a ligand contact to a divalent metal cation. 4-CDP-2-C-methyl-D-erythritol 2-phosphate contacts are provided by residues 58-60 (DIG), 63-67 (FPDTD), 102-108 (AQAPKML), 134-137 (TTTE), phenylalanine 141, and arginine 144.

It belongs to the IspF family. As to quaternary structure, homotrimer. Requires a divalent metal cation as cofactor.

It carries out the reaction 4-CDP-2-C-methyl-D-erythritol 2-phosphate = 2-C-methyl-D-erythritol 2,4-cyclic diphosphate + CMP. Its pathway is isoprenoid biosynthesis; isopentenyl diphosphate biosynthesis via DXP pathway; isopentenyl diphosphate from 1-deoxy-D-xylulose 5-phosphate: step 4/6. Functionally, involved in the biosynthesis of isopentenyl diphosphate (IPP) and dimethylallyl diphosphate (DMAPP), two major building blocks of isoprenoid compounds. Catalyzes the conversion of 4-diphosphocytidyl-2-C-methyl-D-erythritol 2-phosphate (CDP-ME2P) to 2-C-methyl-D-erythritol 2,4-cyclodiphosphate (ME-CPP) with a corresponding release of cytidine 5-monophosphate (CMP). This Shewanella loihica (strain ATCC BAA-1088 / PV-4) protein is 2-C-methyl-D-erythritol 2,4-cyclodiphosphate synthase.